Reading from the N-terminus, the 176-residue chain is COA8 family protein CG14806, mitochondrial (176 aa).

The transit peptide at Met1 to Ala23 directs the protein to the mitochondrion.

It belongs to the COA8 family.

It localises to the mitochondrion inner membrane. Functionally, may be required for cytochrome c complex (COX) assembly and function, COX being the terminal component of the mitochondrial respiratory chain. Its function is as follows. (Microbial infection) Required for optimal replication of E.chaffeensis. This Drosophila melanogaster (Fruit fly) protein is COA8 family protein CG14806, mitochondrial.